Here is a 189-residue protein sequence, read N- to C-terminus: Protein Rex (189 aa).

A compositionally biased stretch (basic residues) spans 1–16 (MPKTRRRPRRSQRKRP). The disordered stretch occupies residues 1-27 (MPKTRRRPRRSQRKRPPTPWPTSQGLD). Positions 2-18 (PKTRRRPRRSQRKRPPT) match the Nuclear localization signal, and RNA-binding (RxRE) motif. Residues 56–70 (RPAYIVTPYWPPVQS) form a homomultimerization region. A Phosphoserine; by host modification is found at Ser70. The short motif at 82-93 (LSAQLYSSLSLD) is the Nuclear export signal element. Residues 87 to 189 (YSSLSLDSPP…PPSPGPSCPM (103 aa)) form a disordered region. Residues 105–114 (PLRSLPRQSL) show a composition bias toward low complexity. Residues 123-131 (PSSRPCANT) are homomultimerization. The segment covering 143–164 (LGSTSQPCLFQTPDSGPKTCTP) has biased composition (polar residues). Residue Thr174 is modified to Phosphothreonine; by host. Ser177 carries the post-translational modification Phosphoserine; by host. Pro residues predominate over residues 178–189 (FPPPSPGPSCPM).

This sequence belongs to the deltaretrovirus Rex protein family. As to quaternary structure, homomultimer. Multimeric assembly is essential for activity and involves XPO1. Binds to human XPO1 and KPNB1. Interacts (via N-terminal nuclear localization signal) with human NPM1. In terms of processing, phosphorylated.

The protein localises to the host nucleus. It localises to the host nucleolus. It is found in the host cytoplasm. Its function is as follows. Rex escorts unspliced gag-pro-pol and singly spliced env mRNAs out of the nucleus of infected cells. These mRNAs carry a recognition sequence called Rex responsive element (RxRE or XRE) located at the 3' region of the long terminal repeat (LTR). This function is essential since most HTLV proteins are translated from unspliced or partially spliced pre-mRNAs that cannot exit the nucleus by the pathway used by fully processed cellular mRNAs. Rex itself is translated from a fully spliced mRNA that probably readily exits the nucleus. Rex's nuclear localization signal (NLS) binds directly to KPNB1/importin beta-1 without previous binding to KPNA1/importin alpha-1. KPNB1 binds to the GDP bound form of RAN (Ran-GDP) and targets Rex to the nucleus. In the nucleus, the conversion from Ran-GDP to Ran-GTP dissociates Rex from KPNB1 and allows Rex's binding to the RRE in viral pre-mRNAs. Rex multimerizes on the RRE via cooperative assembly. This multimerization is critical for its full biological activity, since it may shield the viral RNA from being spliced or down-regulated, and probably exposes Rex's nuclear export signal (NES) to the surface. Rex can then form a complex with XPO1/CRM1, RANBP3 and Ran-GTP, leading to nuclear export of the complex. Conversion from Ran-GTP to Ran-GDP mediates dissociation of the Rex/RRE/XPO1/RANBP3/RAN complex, so that Rex can return to the nucleus for a subsequent round of export. This chain is Protein Rex, found in Human T-cell leukemia virus 1 (isolate Caribbea HS-35 subtype A) (HTLV-1).